The sequence spans 434 residues: Glutamate-1-semialdehyde 2,1-aminomutase 1 (434 aa).

Residue lysine 268 is modified to N6-(pyridoxal phosphate)lysine.

This sequence belongs to the class-III pyridoxal-phosphate-dependent aminotransferase family. HemL subfamily. In terms of assembly, homodimer. It depends on pyridoxal 5'-phosphate as a cofactor.

The protein localises to the cytoplasm. The catalysed reaction is (S)-4-amino-5-oxopentanoate = 5-aminolevulinate. It functions in the pathway porphyrin-containing compound metabolism; protoporphyrin-IX biosynthesis; 5-aminolevulinate from L-glutamyl-tRNA(Glu): step 2/2. The sequence is that of Glutamate-1-semialdehyde 2,1-aminomutase 1 from Shouchella clausii (strain KSM-K16) (Alkalihalobacillus clausii).